The chain runs to 555 residues: Urocanate hydratase (555 aa).

NAD(+)-binding positions include 51–52, Gln-129, 175–177, Glu-195, 241–242, 262–266, 272–273, and Tyr-321; these read GG, GMG, NA, QTSAH, and YL. The active site involves Cys-409. Gly-491 provides a ligand contact to NAD(+).

Belongs to the urocanase family. NAD(+) serves as cofactor.

The protein resides in the cytoplasm. It carries out the reaction 4-imidazolone-5-propanoate = trans-urocanate + H2O. It participates in amino-acid degradation; L-histidine degradation into L-glutamate; N-formimidoyl-L-glutamate from L-histidine: step 2/3. Catalyzes the conversion of urocanate to 4-imidazolone-5-propionate. The chain is Urocanate hydratase from Hyphomonas neptunium (strain ATCC 15444).